The chain runs to 544 residues: Chaperonin GroEL (544 aa).

Residues 30-33, K51, 87-91, G415, 478-480, and D494 contribute to the ATP site; these read TLGP, DGTTT, and DVA. A disordered region spans residues 524-544; it reads PEKEKKPATPAGAGGMGDMEY. The span at 535–544 shows a compositional bias: gly residues; sequence GAGGMGDMEY.

Belongs to the chaperonin (HSP60) family. As to quaternary structure, forms a cylinder of 14 subunits composed of two heptameric rings stacked back-to-back. Interacts with the co-chaperonin GroES.

It is found in the cytoplasm. The catalysed reaction is ATP + H2O + a folded polypeptide = ADP + phosphate + an unfolded polypeptide.. Its function is as follows. Together with its co-chaperonin GroES, plays an essential role in assisting protein folding. The GroEL-GroES system forms a nano-cage that allows encapsulation of the non-native substrate proteins and provides a physical environment optimized to promote and accelerate protein folding. The protein is Chaperonin GroEL of Methylacidiphilum infernorum (isolate V4) (Methylokorus infernorum (strain V4)).